A 299-amino-acid chain; its full sequence is pH-regulated antigen PRA1 (299 aa).

The N-terminal stretch at 1–15 is a signal peptide; sequence MNYLLFCLFFAFSVA. N-linked (GlcNAc...) asparagine glycosylation is found at Asn-48, Asn-89, Asn-135, and Asn-208. The tract at residues 253-299 is disordered; that stretch reads FEDSDSGSDSGASSTASSSHQHTDSNPSATTDANSHCHTHADGEVHC. Positions 259-272 are enriched in low complexity; it reads GSDSGASSTASSSH. A compositionally biased stretch (polar residues) spans 278–288; the sequence is NPSATTDANSH.

This sequence belongs to the ZPS1 family. As to quaternary structure, component of a multiprotein complex of 250 kDa composed of at least HYR1, MP65, and PRA1. Interacts with host Integrin alpha-M/beta-2 heterodimer. Also binds human factor H (CFH), CFHR1, plasminogen (PLG), complement C3, and C4BPA. Interacts with ZRT101. N- and O-glycosylated. The N- and 0-glycosidically linked carbohydrates represent 18 to 20 percent and 3 to 4 percent, respectively, of the molecular mass of PRA1. 0-linked sugar residues may be involved in the interaction with fibrinogen. Contributes highly to the carbohydrate component of the matrix. Treatment with tunicamycin impairs glycosylation.

It localises to the secreted. Functionally, cell surface protein involved in the host-parasite interaction during candidal infection. With MP65, represents a major component of the biofilm matrix. As a surface protein, binds the two human complement regulators CFH and CFHR1, as well as plasminogen PLG, mediates complement evasion and extra-cellular matrix interaction and/or degradation. As a released protein, enhances complement control in direct vicinity of the yeast and thus generates an additional protective layer which controls host complement attack, assisting the fungus in escaping host surveillance. Binds to host fluid-phase C3 and blocks cleavage of C3 to C3a and C3b, leading to inhibition of complement activation and protection from uptake of C.albicans by human macrophages. Also mediates human complement control and complement evasion through binding to C4BPA, another human complement inhibitor, as well as through binding to host integrin alpha-M/beta-2. Binds zinc from its environment and then reassociates with ZRT1 to acquire this essential metal. The polypeptide is pH-regulated antigen PRA1 (Candida albicans (strain SC5314 / ATCC MYA-2876) (Yeast)).